Consider the following 264-residue polypeptide: Undecaprenyl-diphosphatase (264 aa).

8 helical membrane-spanning segments follow: residues 7 to 27, 45 to 65, 86 to 106, 109 to 129, 145 to 165, 186 to 206, 215 to 235, and 244 to 264; these read IVIP…PVSS, TKIL…LFFY, IHVL…YNKI, LFNP…LIIA, INLV…YPGF, VNFS…LDLI, LNIP…FLLI, and KVSL…IYFI.

This sequence belongs to the UppP family.

The protein resides in the cell membrane. It catalyses the reaction di-trans,octa-cis-undecaprenyl diphosphate + H2O = di-trans,octa-cis-undecaprenyl phosphate + phosphate + H(+). Its function is as follows. Catalyzes the dephosphorylation of undecaprenyl diphosphate (UPP). Confers resistance to bacitracin. The sequence is that of Undecaprenyl-diphosphatase from Buchnera aphidicola subsp. Schizaphis graminum (strain Sg).